Consider the following 541-residue polypeptide: MDSQRNILLIALALVSFLLFQQWQVAKNPAPQATQQAQSTGAAPAPSFSDELDPTPAQNVAAKAKTITVSTDVLTLSIDTLGGDVVSAKLNQYSEELNSPESFVLLQNTQGHQFIAQSGLVGPQGIDVTSNNRPAYQVSADSFTLAEGQDELRIPMTYQANGIDYTKTFILKRGSYAVDVVFDVANNSGSEATLGMYAHLRQNLLDSGGNLAMPTYRGGAYSTSDVRYKKYSFDDMKDRNLSAPNDVTVNWVAMIQHYFASAWIPRDEPQAQLYSRVINNLGDMGIRTPNKTIANGDKAEFEATLWVGPKLQDQMAATAPNLDLVVDYGWLWFIAKPLHWLLSVIQTFVGNWGVAIICLTFIVRGAMYPLTKAQYTSMAKMRMLQPKLQAMRERIGDDRQRMSQEMMELYKKEKVNPLGGCLPILLQMPIFIALYWALMESVELRHSPFFGWIHDLSAQDPYYILPLLMGASMFVIQKMSPTTITDPMQQKIMTFMPVMFTFFFLWFPSGLVLYWLVSNIVTLIQQTLIYKALEKKGLHSK.

The chain crosses the membrane as a helical span at residues 6–26 (NILLIALALVSFLLFQQWQVA). The segment covering 31–47 (PQATQQAQSTGAAPAPS) has biased composition (low complexity). Residues 31 to 55 (PQATQQAQSTGAAPAPSFSDELDPT) form a disordered region. 4 helical membrane-spanning segments follow: residues 343-363 (SVIQ…TFIV), 418-438 (LGGC…YWAL), 456-476 (LSAQ…MFVI), and 497-517 (PVMF…YWLV).

The protein belongs to the OXA1/ALB3/YidC family. Type 1 subfamily. As to quaternary structure, interacts with the Sec translocase complex via SecD. Specifically interacts with transmembrane segments of nascent integral membrane proteins during membrane integration.

The protein localises to the cell inner membrane. In terms of biological role, required for the insertion and/or proper folding and/or complex formation of integral membrane proteins into the membrane. Involved in integration of membrane proteins that insert both dependently and independently of the Sec translocase complex, as well as at least some lipoproteins. Aids folding of multispanning membrane proteins. The polypeptide is Membrane protein insertase YidC (Vibrio cholerae serotype O1 (strain ATCC 39541 / Classical Ogawa 395 / O395)).